The sequence spans 156 residues: Small ribosomal subunit protein uS7 (156 aa).

Belongs to the universal ribosomal protein uS7 family. As to quaternary structure, part of the 30S ribosomal subunit. Contacts proteins S9 and S11.

Its function is as follows. One of the primary rRNA binding proteins, it binds directly to 16S rRNA where it nucleates assembly of the head domain of the 30S subunit. Is located at the subunit interface close to the decoding center, probably blocks exit of the E-site tRNA. In Desulfitobacterium hafniense (strain DSM 10664 / DCB-2), this protein is Small ribosomal subunit protein uS7.